Here is a 281-residue protein sequence, read N- to C-terminus: uncharacterized protein (281 aa).

4 consecutive transmembrane segments (helical) span residues 8–28 (ALPVVAIVALVASGVITFIWS), 97–117 (LAVALHGLGLSVLLFDYRGYG), 147–167 (PARIAYFGESLGAAVAVGLAV), and 210–230 (IASVHAPVLVIAGGSDDIVPA).

To S.pombe bem46 and yeast YNL320w.

It localises to the cell membrane. This is an uncharacterized protein from Mycobacterium tuberculosis (strain CDC 1551 / Oshkosh).